Here is a 129-residue protein sequence, read N- to C-terminus: UPF0325 protein Ent638_0703 (129 aa).

The protein belongs to the UPF0325 family.

This is UPF0325 protein Ent638_0703 from Enterobacter sp. (strain 638).